The primary structure comprises 148 residues: F420H(2)-dependent quinone reductase MT1609 (148 aa).

Coenzyme F420-(gamma-Glu)n-binding positions include 46-48, 52-57, 68-71, 79-83, and Y125; these read AKT, RKTPLM, VASL, and VWYHN.

Belongs to the F420H(2)-dependent quinone reductase family.

It localises to the cell membrane. The catalysed reaction is oxidized coenzyme F420-(gamma-L-Glu)(n) + a quinol + H(+) = reduced coenzyme F420-(gamma-L-Glu)(n) + a quinone. In terms of biological role, involved in a F420-dependent anti-oxidant mechanism that protects M.tuberculosis against oxidative stress and bactericidal agents. Catalyzes the F420H(2)-dependent two-electron reduction of quinones to dihydroquinones, thereby preventing the formation of cytotoxic semiquinones obtained by the one-electron reduction pathway. In vitro, catalyzes the reduction of menadione to menadiol; since menaquinone is the sole quinone electron carrier in the respiratory chain in M.tuberculosis, the physiological electron acceptor for Fqr-mediated F420H(2) oxidation is therefore likely to be the endogenous menaquinone found in the membrane fraction of M.tuberculosis. This Mycobacterium tuberculosis (strain CDC 1551 / Oshkosh) protein is F420H(2)-dependent quinone reductase MT1609.